The primary structure comprises 607 residues: Homologous recombination OB-fold protein (607 aa).

Disordered regions lie at residues 25 to 49, 84 to 108, 196 to 308, and 531 to 581; these read LRPN…SYPA, ISSS…SGRQ, PWPS…TTVT, and LKPP…DDLD. Composition is skewed to polar residues over residues 27-49 and 92-108; these read PNSS…SYPA and QQRM…SGRQ. Ser-30 bears the Phosphoserine mark. The residue at position 281 (Arg-281) is an Asymmetric dimethylarginine. The segment covering 295–308 has biased composition (low complexity); sequence SPFSTPRSTSTTVT. A compositionally biased stretch (acidic residues) spans 570 to 581; it reads PEEELPEADDLD.

In terms of assembly, interacts with MCM8; this interaction is necessary for MCM8-MCM9 helicase complex recruitment to DNA damage sites. Interacts with RPA1; this interaction associates HROB with the RPA complex.

The protein resides in the nucleus. The protein localises to the chromosome. Its function is as follows. DNA-binding protein involved in homologous recombination that acts by recruiting the MCM8-MCM9 helicase complex to sites of DNA damage to promote DNA repair synthesis. The protein is Homologous recombination OB-fold protein of Rattus norvegicus (Rat).